Here is a 178-residue protein sequence, read N- to C-terminus: Interleukin-10 (178 aa).

The signal sequence occupies residues 1-18 (MPRSALLCCLILLAGVAA). Intrachain disulfides connect Cys30–Cys126 and Cys80–Cys132. Asn134 carries N-linked (GlcNAc...) asparagine glycosylation.

This sequence belongs to the IL-10 family. Homodimer. Interacts with IL10RA and IL10RB.

It localises to the secreted. In terms of biological role, major immune regulatory cytokine that acts on many cells of the immune system where it has profound anti-inflammatory functions, limiting excessive tissue disruption caused by inflammation. Mechanistically, IL10 binds to its heterotetrameric receptor comprising IL10RA and IL10RB leading to JAK1 and STAT2-mediated phosphorylation of STAT3. In turn, STAT3 translocates to the nucleus where it drives expression of anti-inflammatory mediators. Targets antigen-presenting cells (APCs) such as macrophages and monocytes and inhibits their release of pro-inflammatory cytokines including granulocyte-macrophage colony-stimulating factor /GM-CSF, granulocyte colony-stimulating factor/G-CSF, IL-1 alpha, IL-1 beta, IL-6, IL-8 and TNF-alpha. Also interferes with antigen presentation by reducing the expression of MHC-class II and co-stimulatory molecules, thereby inhibiting their ability to induce T cell activation. In addition, controls the inflammatory response of macrophages by reprogramming essential metabolic pathways including mTOR signaling. The chain is Interleukin-10 (IL10) from Lama glama (Llama).